The chain runs to 139 residues: Large ribosomal subunit protein uL16 (139 aa).

Belongs to the universal ribosomal protein uL16 family. Part of the 50S ribosomal subunit.

Its function is as follows. Binds 23S rRNA and is also seen to make contacts with the A and possibly P site tRNAs. This is Large ribosomal subunit protein uL16 from Crocosphaera subtropica (strain ATCC 51142 / BH68) (Cyanothece sp. (strain ATCC 51142)).